The primary structure comprises 326 residues: MVQLTDAFARKFYYLRLSITDVCNFRCTYCLPEGYRPDGVKSFLSLDEINRVSRAFALLGTEKIRLTGGEPSMRRDFTDIIATIRQNPAIRTLAVTTNGYRLVRDVAQWRDAGLTAINVSVDSLDPRQFHAITGQDKFYQVMQGIDAAFDAGFDKVKVNAVLMRDVNDRQLSAFLDWIKPRPIQLRFIELMETGEGGNLFRKHHVSGGVIRQQLLEQGWQQQDRARSDGPAQVFHHSDYQGEIGLIMPYEKDFCASCNRLRVSALGNLHLCLFGEQGITLRDLLGSDDQQDELIARIQSALQTKKQTHFLHQGNSGITQNLSFIGG.

One can recognise a Radical SAM core domain in the interval 7–240 (AFARKFYYLR…AQVFHHSDYQ (234 aa)). Arg-16 contributes to the GTP binding site. Cys-23 and Cys-27 together coordinate [4Fe-4S] cluster. Position 29 (Tyr-29) interacts with S-adenosyl-L-methionine. [4Fe-4S] cluster is bound at residue Cys-30. Arg-65 provides a ligand contact to GTP. Gly-69 lines the S-adenosyl-L-methionine pocket. Residue Thr-96 coordinates GTP. Position 120 (Ser-120) interacts with S-adenosyl-L-methionine. Lys-157 provides a ligand contact to GTP. Met-191 provides a ligand contact to S-adenosyl-L-methionine. Residues Cys-254 and Cys-257 each coordinate [4Fe-4S] cluster. Position 259 to 261 (259 to 261 (RLR)) interacts with GTP. Residue Cys-271 coordinates [4Fe-4S] cluster.

This sequence belongs to the radical SAM superfamily. MoaA family. Monomer and homodimer. Requires [4Fe-4S] cluster as cofactor.

It carries out the reaction GTP + AH2 + S-adenosyl-L-methionine = (8S)-3',8-cyclo-7,8-dihydroguanosine 5'-triphosphate + 5'-deoxyadenosine + L-methionine + A + H(+). Its pathway is cofactor biosynthesis; molybdopterin biosynthesis. In terms of biological role, catalyzes the cyclization of GTP to (8S)-3',8-cyclo-7,8-dihydroguanosine 5'-triphosphate. The polypeptide is GTP 3',8-cyclase (Yersinia pestis).